Here is a 239-residue protein sequence, read N- to C-terminus: Adapter protein MecA (239 aa).

Basic and acidic residues predominate over residues 118-128; the sequence is EQRTKEKEAQG. The interval 118 to 137 is disordered; sequence EQRTKEKEAQGSKRQKSSAR.

It belongs to the MecA family. In terms of assembly, homodimer.

Its function is as follows. Enables the recognition and targeting of unfolded and aggregated proteins to the ClpC protease or to other proteins involved in proteolysis. This is Adapter protein MecA from Staphylococcus aureus (strain bovine RF122 / ET3-1).